Consider the following 377-residue polypeptide: MGSFEIPEKHTALLQGEGGSLVIARDVPLPTLGPGHLLVKTAAVALNPCDFKTPAAFPNPGYYNGCDFAGTVVALGSDNIRDGGPWKIGDRIFGAIHGANPSDWDSGSHAEYVKAVSVFSYRIPDWMTFEEAAGLSPCCIATMGVSLFKALELPGTFEEPATKPLDVLIYGGSSSVGSLGIQMVKLTGHRLGHRCITTCSPKNFDLVKSYGADEVFDYKSPTCAQDIRKATRNCLKYAVDPFGEVKTMAICTEAIGRAGGRYSALEKFQEDVCDRKTVKRELTMGAIIIGHGLDLGGRYTRPHSPEMRAWGIEWYKSIQRLVDARKFKPHPIRVLKGGFEDMLEGLAMLKRREISAEKLVVSLDPAVSGLTADSTAR.

The enoyl reductase (ER) domain stretch occupies residues Gly18–Val361. An NADP(+)-binding site is contributed by Cys49–Lys52. Pro137–Gly144 contributes to the substrate binding site. NADP(+)-binding positions include Ser173–Val176, Ser200–Asn203, Tyr218, Leu265–Glu266, and Thr283. Gly285 to Ile289 provides a ligand contact to substrate. Position 354–355 (Ile354–Ser355) interacts with NADP(+).

It belongs to the zinc-containing alcohol dehydrogenase family. Heme serves as cofactor.

Its pathway is secondary metabolite biosynthesis. Its function is as follows. Enoyl reductase; part of the gene cluster that mediates the biosynthesis of chaetoglobosin A which has a unique inhibitory activity against actin polymerization in mammalian cells. Chaetoglobosin A and its intermediates are involved in the morphological differentiation of C.globosum. The first step of the pathway is the synthesis of prochaetoglobosin I via condensation of one acetyl-CoA, 8 malonyl-CoA, and a L-tryptophan molecule by the PKS-NRPS hybrid synthetase cheA, followed by reduction of backbone double bond to install desired geometry by the enoyl reductase cheB. Further multiple oxidation steps performed by the cytochrome P450 monooxygenases cheE and cheG, as well as by the FAD-linked oxidoreductase cheF, lead to the formation of chaetoglobosin A. Depending on the order of action of these reductases, distinct intermediates can be identified. Within the pathway, the cytochrome P450 monooxygenase cheE catalyzes a stereospecific epoxidation on prochaetoglobosin I, cytoglobosin D, and chaetoglobosin J intermediates. The FAD-linked oxidoreductase cheF performs dehydrogenation of the C-20 hydroxyl groups in the 20-dihyrochaetoglobosin A and cytoglobosin D intermediates. Finally, the cytochrome P450 monooxygenase cheG can catalyze the stereospecific dihydroxylation of prochaetoglobosin I and prochaetoglobosin IV at C-19 and C-20, respectively. The Diels-Alderase cheD may play a role in the post-PKS-NRPS biosynthetic steps catalyzing Diels-Alder cyclization. The sequence is that of Enoyl reductase cheB from Chaetomium globosum (strain ATCC 6205 / CBS 148.51 / DSM 1962 / NBRC 6347 / NRRL 1970) (Soil fungus).